The chain runs to 1334 residues: DNA-directed RNA polymerase subunit beta' (1334 aa).

Zn(2+) is bound by residues Cys213, Cys284, Cys291, and Cys294. Positions Ser1299 to Arg1308 are enriched in low complexity. Residues Ser1299–Glu1334 form a disordered region. Positions Ala1318 to Glu1334 are enriched in acidic residues.

It belongs to the RNA polymerase beta' chain family. RpoC2 subfamily. As to quaternary structure, in cyanobacteria the RNAP catalytic core is composed of 2 alpha, 1 beta, 1 beta', 1 gamma and 1 omega subunit. When a sigma factor is associated with the core the holoenzyme is formed, which can initiate transcription. It depends on Zn(2+) as a cofactor.

It catalyses the reaction RNA(n) + a ribonucleoside 5'-triphosphate = RNA(n+1) + diphosphate. Functionally, DNA-dependent RNA polymerase catalyzes the transcription of DNA into RNA using the four ribonucleoside triphosphates as substrates. This chain is DNA-directed RNA polymerase subunit beta', found in Microcystis aeruginosa (strain NIES-843 / IAM M-2473).